The primary structure comprises 300 residues: Ribosomal protein L11 methyltransferase (300 aa).

S-adenosyl-L-methionine is bound by residues threonine 152, glycine 173, aspartate 195, and asparagine 234.

Belongs to the methyltransferase superfamily. PrmA family.

It localises to the cytoplasm. The catalysed reaction is L-lysyl-[protein] + 3 S-adenosyl-L-methionine = N(6),N(6),N(6)-trimethyl-L-lysyl-[protein] + 3 S-adenosyl-L-homocysteine + 3 H(+). Methylates ribosomal protein L11. The polypeptide is Ribosomal protein L11 methyltransferase (Burkholderia thailandensis (strain ATCC 700388 / DSM 13276 / CCUG 48851 / CIP 106301 / E264)).